The following is a 93-amino-acid chain: Large ribosomal subunit protein bL31 (93 aa).

The disordered stretch occupies residues 72 to 93; that stretch reads VKTVSSNADNQKETTEELIKNK. Residues 81–93 show a composition bias toward basic and acidic residues; sequence NQKETTEELIKNK.

This sequence belongs to the bacterial ribosomal protein bL31 family. Type A subfamily. In terms of assembly, part of the 50S ribosomal subunit.

Its function is as follows. Binds the 23S rRNA. This is Large ribosomal subunit protein bL31 from Onion yellows phytoplasma (strain OY-M).